Here is a 134-residue protein sequence, read N- to C-terminus: Pre-histone-like nucleoprotein (134 aa).

The propeptide occupies 2–23 (AILISPTNNTGWGLGTHKLFGG). A disordered region spans residues 40-62 (RASWGSKGRRRRQGRARGAPLDP). The short motif at 125–134 (KRKRRVRFRQ) is the Nuclear localization signal element.

This sequence belongs to the adenoviridae histone-like nucleoprotein family. In terms of assembly, interacts with the core-capsid bridging protein; this interaction bridges the virus core to the capsid. Interacts with host NPM1; this interaction might play a role in placing the pre-histone-like nucleoprotein on the viral DNA or regulating viral gene expression. Interacts with host HMGB1; this interaction inhibits host immune response. Cleaved near the N-terminus by the viral protease during virion maturation to form the mature protein.

The protein resides in the virion. The protein localises to the host nucleus. It is found in the host nucleolus. Functionally, plays a role in the inhibition of host immune response within the nucleus. Interacts with cellular nucleosomes and immobilizes the host immune danger signal HMGB1 on chromatin. In turn, prevents HMGB1 release out of the cell and thus decreases inflammation. Also plays a role in the wrapping and condensation of the viral DNA. May also promote viral genome import into the nucleus. This chain is Pre-histone-like nucleoprotein, found in Canis lupus familiaris (Dog).